A 139-amino-acid polypeptide reads, in one-letter code: Small ribosomal subunit protein eS12 (139 aa).

The protein belongs to the eukaryotic ribosomal protein eS12 family. Subunit of the 40S ribosomal complex. Part of the small subunit (SSU) processome, composed of more than 70 proteins and the RNA chaperone small nucleolar RNA (snoRNA) U3.

The protein resides in the nucleus. It is found in the nucleolus. Functionally, subunit of the 40S ribosomal complex. Part of the small subunit (SSU) processome, first precursor of the small eukaryotic ribosomal subunit. During the assembly of the SSU processome in the nucleolus, many ribosome biogenesis factors, an RNA chaperone and ribosomal proteins associate with the nascent pre-rRNA and work in concert to generate RNA folding, modifications, rearrangements and cleavage as well as targeted degradation of pre-ribosomal RNA by the RNA exosome. In wing imaginal disks, might have a role in translation rate, growth and cell competition, probably through regulation of Xrp1 expression. Might have a role in development and longevity. In Drosophila melanogaster (Fruit fly), this protein is Small ribosomal subunit protein eS12.